The chain runs to 878 residues: MKIVNVESTFNIHNLHFFLYETFILIPRQTPIQFGLQFFKFGGKRDYDEACEDWDPSIGVDQTNGNSNFNNEFSNNGIDSSNGNFNQFNTNTNNNNNNNNNNINSNLNNGLNINSNNNNNNNNNNNLINNSNNNNNNNNNSLSTSLSNNSVPLTISSNNQNSLVPSNNNNNSTNNNNNNNNNNNNSTTNNTSTTTTTGSTSTSITTTTTSGTSKKGERKRTKFPEEEVKVLCDLVILFGKDVRTILTFKPFSGGKYSERQIYDKVRALKRTGLVPTNPTSDDIKKSRFDLGIADNVDIQSLKSTKKGRLSNYVSNSSQSSDSDYSSSDHEDDDYIPNSTLSSSSTLPIPSNPNSNKRLIISRNPNQLSSTNVNNNINNSGGSSNNNNNSNSINNNNNNNINNINNNNNNINNNNSNNNNNNNNNINNNNNSNNSNSIHNNNNNSNNNNNNNNNNNNNNNNNNNNNNNIINSNSNNNNNNSNGNITPTTPVTSSRRSIQILQENANHLISQIQNQMSTTPPITPTSHHNAIPIQSLSNEIINTPSRTRERDRIEKEKEKLEKERLEKLEQKEKERLEKLEKKNQQKLLEQQKEQQQKEQQQQQKQQKNNRHHLDLTDDEDEDDDENSLKSDNSNNEKDVNLSNNSSNKGSGKLNLTGNSVFDYYSTGHNLSLYKSIKTSPSSMVTIPSPSSSCSSTSSIIGSSSSSGGGGGSSGVIGISSKYNYSFNPFTTTSITSLLPTTVNSNSNSSGNGSSNNSTPIVNVISTSNSNSNSNSFFKYETDNNLFIYYPFFNQNTNSNNYTFERDLLTLTVEVPSIFDWIKDKQPQNIDKKIKIEFPHPGKNYGPPRKVNKLPEGINGVGFIFEKIKQGSVDFDISIL.

Disordered stretches follow at residues 58–223 (IGVD…RTKF), 306–494 (KGRL…TSSR), 585–652 (KLLE…SGKL), and 679–709 (PSSM…GGGG). 3 stretches are compositionally biased toward low complexity: residues 64–213 (NGNS…SGTS), 314–325 (SNSSQSSDSDYS), and 335–355 (IPNS…PNSN). Residues 362–372 (RNPNQLSSTNV) show a composition bias toward polar residues. Low complexity predominate over residues 373–494 (NNNINNSGGS…TPTTPVTSSR (122 aa)). Positions 585–595 (KLLEQQKEQQQ) are enriched in basic and acidic residues. Over residues 596 to 605 (KEQQQQQKQQ) the composition is skewed to low complexity. Positions 615–624 (TDDEDEDDDE) are enriched in acidic residues. Composition is skewed to low complexity over residues 639 to 652 (NLSN…SGKL) and 679 to 704 (PSSM…SSSS).

This is an uncharacterized protein from Dictyostelium discoideum (Social amoeba).